The following is a 242-amino-acid chain: Ethanolamine ammonia-lyase small subunit (242 aa).

Residues Val-155 and Glu-176 each coordinate adenosylcob(III)alamin.

The protein belongs to the EutC family. In terms of assembly, the basic unit is a heterodimer which dimerizes to form tetramers. The heterotetramers trimerize; 6 large subunits form a core ring with 6 small subunits projecting outwards. Requires adenosylcob(III)alamin as cofactor.

The protein resides in the bacterial microcompartment. It catalyses the reaction ethanolamine = acetaldehyde + NH4(+). It participates in amine and polyamine degradation; ethanolamine degradation. Its function is as follows. Catalyzes the deamination of various vicinal amino-alcohols to oxo compounds. Allows this organism to utilize ethanolamine as the sole source of nitrogen and carbon in the presence of external vitamin B12. The sequence is that of Ethanolamine ammonia-lyase small subunit from Clostridium acetobutylicum (strain ATCC 824 / DSM 792 / JCM 1419 / IAM 19013 / LMG 5710 / NBRC 13948 / NRRL B-527 / VKM B-1787 / 2291 / W).